A 293-amino-acid chain; its full sequence is Small ribosomal subunit protein uS2m (293 aa).

Low complexity predominate over residues 21–38; the sequence is GRAAQRGRTLGSAAAAAA. 2 disordered regions span residues 21 to 49 and 263 to 293; these read GRAAQRGRTLGSAAAAAAREPERDSDRSA and QGAPGPHPANPAAPGAPSPGAQAQLGMGHSP. Residues 39–49 are compositionally biased toward basic and acidic residues; that stretch reads REPERDSDRSA. Residues 267–279 show a composition bias toward pro residues; the sequence is GPHPANPAAPGAP.

It belongs to the universal ribosomal protein uS2 family. Component of the mitochondrial ribosome small subunit (28S) which comprises a 12S rRNA and about 30 distinct proteins.

It localises to the mitochondrion. Its function is as follows. Required for mitoribosome formation and stability, and mitochondrial translation. The polypeptide is Small ribosomal subunit protein uS2m (MRPS2) (Bos taurus (Bovine)).